The chain runs to 953 residues: Translation initiation factor IF-2 (953 aa).

Disordered regions lie at residues 52 to 241 (KASK…QQEA) and 279 to 363 (TKLK…TERK). 3 stretches are compositionally biased toward basic and acidic residues: residues 80 to 89 (TGSEHVEKTQ), 98 to 111 (FKAE…EQAA), and 140 to 188 (QGDK…ENHK). The span at 191–207 (RFTNQKKQGRQEPQSKS) shows a compositional bias: polar residues. Residues 229–241 (RQSETRFRAQQEA) show a composition bias toward basic and acidic residues. The span at 282-291 (KSSNISAKST) shows a compositional bias: polar residues. Positions 300-317 (ARPEKNRELTHHSQEGQK) are enriched in basic and acidic residues. Over residues 322–338 (SWNSQNQVRNQKNSNWN) the composition is skewed to low complexity. Over residues 339–348 (KNKKTKKGKN) the composition is skewed to basic residues. In terms of domain architecture, tr-type G spans 454-623 (ERAPVVTIMG…LLVAEVEELK (170 aa)). The segment at 463–470 (GHVDHGKT) is G1. Residue 463–470 (GHVDHGKT) coordinates GTP. The segment at 488–492 (GITQH) is G2. The tract at residues 509–512 (DTPG) is G3. GTP contacts are provided by residues 509 to 513 (DTPGH) and 563 to 566 (NKID). Positions 563–566 (NKID) are G4. Residues 599–601 (SAK) are G5.

The protein belongs to the TRAFAC class translation factor GTPase superfamily. Classic translation factor GTPase family. IF-2 subfamily.

Its subcellular location is the cytoplasm. Functionally, one of the essential components for the initiation of protein synthesis. Protects formylmethionyl-tRNA from spontaneous hydrolysis and promotes its binding to the 30S ribosomal subunits. Also involved in the hydrolysis of GTP during the formation of the 70S ribosomal complex. This chain is Translation initiation factor IF-2, found in Streptococcus pyogenes serotype M4 (strain MGAS10750).